The following is a 334-amino-acid chain: UDP-glucose 4-epimerase (334 aa).

Residues 11–12 (YI), 31–36 (DNLQKG), 50–51 (DI), 72–76 (FAANS), asparagine 91, threonine 116, tyrosine 140, lysine 144, and phenylalanine 168 each bind NAD(+). Threonine 116 and tyrosine 140 together coordinate substrate. Tyrosine 140 serves as the catalytic Proton acceptor. Residues asparagine 169, 188-189 (HL), 205-207 (AIF), arginine 220, and 281-284 (RSGD) contribute to the substrate site.

This sequence belongs to the NAD(P)-dependent epimerase/dehydratase family. In terms of assembly, homodimer. The cofactor is NAD(+).

It carries out the reaction UDP-alpha-D-glucose = UDP-alpha-D-galactose. The protein operates within carbohydrate metabolism; galactose metabolism. Functionally, involved in the metabolism of galactose. Catalyzes the conversion of UDP-galactose (UDP-Gal) to UDP-glucose (UDP-Glc) through a mechanism involving the transient reduction of NAD. In Halalkalibacterium halodurans (strain ATCC BAA-125 / DSM 18197 / FERM 7344 / JCM 9153 / C-125) (Bacillus halodurans), this protein is UDP-glucose 4-epimerase (galE).